The sequence spans 289 residues: MTAGAPSKFSLYLQLIRWNRPAGWLLLLWPTLSALWLASHGFPGWHLVTVFTLGTFLMRSAGCCINDVADRDFDRHVKRTAQRPVTSGAVSVREALGLGAVLALLAFGLVLTTNAVTIAWSFAALAVTLAYPFAKRYVSMPQAVLGVAFSCGILMAFAAVQSRVPPLAWALLLGNLFWVIAYDTEYAMVDRDDDLKIGMKTSAITLGRFDVAGVMLSYLIFISIWAFALIQRAQSAIFMIAIALALAQALWHGWLIRKRERDDCFKAFRLNHWLGFTVFAGVALSYWGR.

9 helical membrane-spanning segments follow: residues 22 to 42, 45 to 65, 96 to 116, 118 to 138, 140 to 160, 164 to 184, 211 to 231, 236 to 256, and 267 to 287; these read AGWLLLLWPTLSALWLASHGF, WHLVTVFTLGTFLMRSAGCCI, LGLGAVLALLAFGLVLTTNAV, IAWSFAALAVTLAYPFAKRYV, MPQAVLGVAFSCGILMAFAAV, VPPLAWALLLGNLFWVIAYDT, VAGVMLSYLIFISIWAFALIQ, AIFMIAIALALAQALWHGWLI, and AFRLNHWLGFTVFAGVALSYW.

It belongs to the UbiA prenyltransferase family. It depends on Mg(2+) as a cofactor.

The protein localises to the cell inner membrane. It catalyses the reaction all-trans-octaprenyl diphosphate + 4-hydroxybenzoate = 4-hydroxy-3-(all-trans-octaprenyl)benzoate + diphosphate. Its pathway is cofactor biosynthesis; ubiquinone biosynthesis. In terms of biological role, catalyzes the prenylation of para-hydroxybenzoate (PHB) with an all-trans polyprenyl group. Mediates the second step in the final reaction sequence of ubiquinone-8 (UQ-8) biosynthesis, which is the condensation of the polyisoprenoid side chain with PHB, generating the first membrane-bound Q intermediate 3-octaprenyl-4-hydroxybenzoate. The chain is 4-hydroxybenzoate octaprenyltransferase from Polaromonas naphthalenivorans (strain CJ2).